Here is a 3380-residue protein sequence, read N- to C-terminus: Apolipophorins (3380 aa).

Positions 1–21 are cleaved as a signal peptide; that stretch reads MGTPPHIWFLLILAISSGGLS. Residues 40 to 646 form the Vitellogenin domain; the sequence is YQKGQTYTYS…SQSSYLPRSV (607 aa). N132, N649, N969, N2174, N2851, and N3177 each carry an N-linked (GlcNAc...) asparagine glycan. In terms of domain architecture, VWFD spans 2815 to 2979; that stretch reads ATAILLNSHH…NAWKVDAQCA (165 aa). The cysteines at positions 2839 and 2978 are disulfide-linked.

Post-translationally, cleaved into 2 chains by furin protease. However, prevention of cleavage does not impair its function. N-glycosylated. Present in brain, hemolymph, fat body and eyes.

It localises to the secreted. Functionally, constitutes the major component of lipophorin, which mediates transport for various types of lipids in hemolymph. Acts by forming lipoprotein particles that bind lipoproteins and lipids. May be required for morphogens wingless (wg) and hedgehog (hh) function, possibly by acting as vehicles for the movement of wg and hh. This is Apolipophorins from Locusta migratoria (Migratory locust).